The sequence spans 574 residues: DNA mismatch repair protein MutL (574 aa).

It belongs to the DNA mismatch repair MutL/HexB family.

Its function is as follows. This protein is involved in the repair of mismatches in DNA. It is required for dam-dependent methyl-directed DNA mismatch repair. May act as a 'molecular matchmaker', a protein that promotes the formation of a stable complex between two or more DNA-binding proteins in an ATP-dependent manner without itself being part of a final effector complex. This is DNA mismatch repair protein MutL from Coxiella burnetii (strain RSA 331 / Henzerling II).